A 143-amino-acid polypeptide reads, in one-letter code: Ribonuclease HI (143 aa).

The RNase H type-1 domain occupies 1-136; sequence MQEIEIFCDG…CDSLAKLEAQ (136 aa). Mg(2+) is bound by residues Asp-9, Glu-47, Asp-69, and Asp-128.

The protein belongs to the RNase H family. Monomer. It depends on Mg(2+) as a cofactor.

It is found in the cytoplasm. The enzyme catalyses Endonucleolytic cleavage to 5'-phosphomonoester.. In terms of biological role, endonuclease that specifically degrades the RNA of RNA-DNA hybrids. The polypeptide is Ribonuclease HI (rnhA) (Helicobacter pylori (strain ATCC 700392 / 26695) (Campylobacter pylori)).